Consider the following 152-residue polypeptide: Inner membrane protein YbbJ (152 aa).

The chain crosses the membrane as a helical span at residues 1 to 21; it reads MMELMVVHPHIFWLSLGGLLL. Residues 22–31 lie on the Cytoplasmic side of the membrane; sequence AAEMLGGNGY. Residues 32 to 52 traverse the membrane as a helical segment; that stretch reads LLWSGVAAVITGLVVWLVPLG. Over 53 to 54 the chain is Periplasmic; sequence WE. The chain crosses the membrane as a helical span at residues 55-75; it reads WQGVMFAILTLLAAWLWWKWL. Over 76–152 the chain is Cytoplasmic; it reads SRRVREQKHS…ITLHIRAVSS (77 aa).

This sequence to M.jannaschii MJ0826.

It localises to the cell inner membrane. The protein is Inner membrane protein YbbJ (ybbJ) of Escherichia coli (strain K12).